An 828-amino-acid chain; its full sequence is Glycerol-3-phosphate acyltransferase (828 aa).

An HXXXXD motif motif is present at residues 309–314 (CHRSHI).

Belongs to the GPAT/DAPAT family.

It is found in the cell inner membrane. The enzyme catalyses sn-glycerol 3-phosphate + an acyl-CoA = a 1-acyl-sn-glycero-3-phosphate + CoA. It functions in the pathway phospholipid metabolism; CDP-diacylglycerol biosynthesis; CDP-diacylglycerol from sn-glycerol 3-phosphate: step 1/3. The sequence is that of Glycerol-3-phosphate acyltransferase from Pseudomonas putida (strain GB-1).